Consider the following 245-residue polypeptide: Probable metal transport system ATP-binding protein CPn_0542/CP_0210/CPj0542/CpB0563 (245 aa).

One can recognise an ABC transporter domain in the interval I5 to F240. G39–S46 lines the ATP pocket.

It belongs to the ABC transporter superfamily.

The protein localises to the cell inner membrane. Functionally, part of an ATP-driven transport system CPn0541/CPn0542/CPn0543 for a metal. Probably responsible for energy coupling to the transport system. In Chlamydia pneumoniae (Chlamydophila pneumoniae), this protein is Probable metal transport system ATP-binding protein CPn_0542/CP_0210/CPj0542/CpB0563.